We begin with the raw amino-acid sequence, 426 residues long: MENMFRLMDQDQDLTNNRCIWVNGPVIVGAGPSGLATAACLHEQNVPFVVLERADCIASLWQKRTYDRLKLHLPKQFCQLPKMPFPEDFPEYPTKRQFIDYLESYATRFEINPKFNECVQTARFDETSGLWRVKTVSKSESTQTEVEYICRWLVVATGENAERVMPEIDGLSEFSGEVIHACDYKSGEKFAGKKVLVVGCGNSGMEVSLDLANHFAKPSMVVRSSLHVMPREVMGKSTFELAMKMLRWFPLWLVDKILLVLSWMVLGNIEKYGLKRPEMGPMELKSVKGKTPVLDIGAIEKIRLGKINVVPGIKRFNGNKVELVNGEQLDVDSVVLATGYRSNVPYWLQENEFFAKNGFPKTVADNNGWKGRTGLYAVGFTRKGLSGASMDAVKIAQDIGSVWQLETKQPTKRSRGSLRRCISQQF.

29 to 34 (GAGPSG) contacts FAD. 199 to 204 (GCGNSG) is a binding site for NADP(+).

This sequence belongs to the FMO family. FAD serves as cofactor. Expressed in root tips and in hydathodes. Expressed in root vasculature and quiescent center, but not in the meristematic zone of the root tip.

It catalyses the reaction indole-3-pyruvate + NADPH + O2 + H(+) = (indol-3-yl)acetate + CO2 + NADP(+) + H2O. It participates in plant hormone metabolism; auxin biosynthesis. In terms of biological role, involved in auxin biosynthesis. Belongs to the set of redundant YUCCA genes probably responsible for auxin biosynthesis in roots. The chain is Probable indole-3-pyruvate monooxygenase YUCCA8 (YUC8) from Arabidopsis thaliana (Mouse-ear cress).